The primary structure comprises 1028 residues: Multidrug resistance protein MdtC (1028 aa).

12 consecutive transmembrane segments (helical) span residues 3–23 (FFAL…AITL), 333–353 (EVEQ…FLFL), 360–380 (LIPA…MYLC), 387–407 (LSLM…IVVL), 431–451 (VGFT…PLLL), 463–483 (FAVT…TLTP), 528–548 (LVGV…ISIP), 853–873 (VILI…LYES), 875–895 (VHPL…LLAL), 897–917 (LFNA…IGIV), 953–973 (PIMM…ISGG), and 984–1004 (ITIV…TPVV).

This sequence belongs to the resistance-nodulation-cell division (RND) (TC 2.A.6) family. MdtC subfamily. As to quaternary structure, part of a tripartite efflux system composed of MdtA, MdtB and MdtC. MdtC forms a heteromultimer with MdtB.

It is found in the cell inner membrane. The chain is Multidrug resistance protein MdtC from Citrobacter koseri (strain ATCC BAA-895 / CDC 4225-83 / SGSC4696).